The primary structure comprises 179 residues: Large ribosomal subunit protein uL5 (179 aa).

The protein belongs to the universal ribosomal protein uL5 family. As to quaternary structure, part of the 50S ribosomal subunit; part of the 5S rRNA/L5/L18/L25 subcomplex. Contacts the 5S rRNA and the P site tRNA. Forms a bridge to the 30S subunit in the 70S ribosome.

In terms of biological role, this is one of the proteins that bind and probably mediate the attachment of the 5S RNA into the large ribosomal subunit, where it forms part of the central protuberance. In the 70S ribosome it contacts protein S13 of the 30S subunit (bridge B1b), connecting the 2 subunits; this bridge is implicated in subunit movement. Contacts the P site tRNA; the 5S rRNA and some of its associated proteins might help stabilize positioning of ribosome-bound tRNAs. This Burkholderia ambifaria (strain MC40-6) protein is Large ribosomal subunit protein uL5.